The primary structure comprises 615 residues: Mitochondrial distribution and morphology protein 34 (615 aa).

An SMP-LTD domain is found at 1 to 195 (MAFNFNWSPL…LPAIIHRLSL (195 aa)). Disordered stretches follow at residues 293 to 313 (SDKP…RTSS), 346 to 566 (ATTG…PQPD), and 596 to 615 (PAFW…YEPR). Residues 301 to 313 (TPASTPNLHRTSS) are compositionally biased toward polar residues. The segment covering 346 to 355 (ATTGLSLGSG) has biased composition (low complexity). The segment covering 356–367 (RHSKAGRKKKMR) has biased composition (basic residues). Composition is skewed to polar residues over residues 384–403 (IGST…TRTP), 435–446 (DATTSARASESS), and 457–499 (VTAQ…YSSR). Residues 517–557 (QQQQFQQQQQQQQQQQQQQQQQQQQQQQQQQQQQQQQQQQQ) show a composition bias toward low complexity. Basic and acidic residues predominate over residues 596–606 (PAFWEDSHQHD).

This sequence belongs to the MDM34 family. Component of the ER-mitochondria encounter structure (ERMES) or MDM complex, composed of mmm-1, mdm10, mdm12 and mdm34.

It is found in the mitochondrion outer membrane. In terms of biological role, component of the ERMES/MDM complex, which serves as a molecular tether to connect the endoplasmic reticulum (ER) and mitochondria. Components of this complex are involved in the control of mitochondrial shape and protein biogenesis, and function in nonvesicular lipid trafficking between the ER and mitochondria. Mdm34 is required for the interaction of the ER-resident membrane protein mmm-1 and the outer mitochondrial membrane-resident beta-barrel protein mdm10. This chain is Mitochondrial distribution and morphology protein 34, found in Neurospora crassa (strain ATCC 24698 / 74-OR23-1A / CBS 708.71 / DSM 1257 / FGSC 987).